The following is a 929-amino-acid chain: ATP-dependent RNA helicase DDX42 (929 aa).

Position 5 is an N6-acetyllysine (lysine 5). Omega-N-methylarginine is present on arginine 12. 2 disordered regions span residues 25 to 119 and 182 to 203; these read KKEE…LEAF and EYDS…LPPI. Positions 35-52 are enriched in low complexity; the sequence is SHSAFGAASSSSGFGKSA. Serine 58 is subject to Phosphoserine. Residues 70–84 are compositionally biased toward acidic residues; that stretch reads DEENAYFEDEEEDSS. Phosphoserine is present on residues serine 96, serine 104, serine 109, and serine 111. Residues 116–157 adopt a coiled-coil conformation; it reads LEAFMAEVEDQAARDMKRLEEKDKERKNVKGIRDDIEEEDDQ. Serine 185 carries the phosphoserine modification. Residues 253-281 carry the Q motif motif; the sequence is SSFAHFGFDEQLMHQIRKSEYTQPTPIQC. Positions 284–459 constitute a Helicase ATP-binding domain; it reads VPVALSGRDM…RDILIDPIRV (176 aa). ATP is bound at residue 297–304; sequence AKTGSGKT. The DEAD box motif lies at 407 to 410; sequence DEAD. One can recognise a Helicase C-terminal domain in the interval 487-632; sequence WLTRRLVEFT…HVSKELLDLA (146 aa). Disordered regions lie at residues 662-682 and 723-929; these read ERPG…VMSN and GTSS…RWDS. A compositionally biased stretch (low complexity) spans 723–737; that stretch reads GTSSAGASGWTSAGS. 2 stretches are compositionally biased toward polar residues: residues 738 to 777 and 787 to 798; these read LNSV…SSAP and GVNNTASGNNSR. Residues 739-828 are necessary for interaction with TP53BP2; the sequence is NSVPTNSAQQ…RHSHGDGGNR (90 aa). The segment covering 821 to 911 has biased composition (basic and acidic residues); the sequence is SHGDGGNRHG…KVDSKTDKTP (91 aa). Lysine 894 participates in a covalent cross-link: Glycyl lysine isopeptide (Lys-Gly) (interchain with G-Cter in SUMO2).

Belongs to the DEAD box helicase family. DDX42 subfamily. As to quaternary structure, transient component of the SF3B subcomplex of the 17S U2 SnRNP complex. Interacts (via the C-terminus) with TP53BP2; the interaction is not inhibitied by TP53BP2 ubiquitination and is independent of p53/TP53.

The protein localises to the cytoplasm. The protein resides in the nucleus. It carries out the reaction ATP + H2O = ADP + phosphate + H(+). ATP-dependent RNA helicase that binds to partially double-stranded RNAs (dsRNAs) in order to unwind RNA secondary structures. Unwinding is promoted in the presence of single-strand binding proteins. Also mediates RNA duplex formation thereby displacing the single-strand RNA binding protein. ATP and ADP modulate its activity: ATP binding and hydrolysis by DDX42 triggers RNA strand separation, whereas the ADP-bound form of the protein triggers annealing of complementary RNA strands. Required for assembly of the 17S U2 SnRNP complex of the spliceosome, a large ribonucleoprotein complex that removes introns from transcribed pre-mRNAs: DDX42 associates transiently with the SF3B subcomplex of the 17S U2 SnRNP complex and is released after fulfilling its role in the assembly of 17S U2 SnRNP. Involved in the survival of cells by interacting with TP53BP2 and thereby counteracting the apoptosis-stimulating activity of TP53BP2. Relocalizes TP53BP2 to the cytoplasm. This is ATP-dependent RNA helicase DDX42 (Ddx42) from Mus musculus (Mouse).